Consider the following 159-residue polypeptide: Transmembrane protein 42 (159 aa).

4 helical membrane passes run 37-57, 59-79, 100-120, and 124-144; these read FWGV…AASA, LAFG…VMAS, IASV…GYVL, and CQEV…TLIH.

Its subcellular location is the membrane. This Homo sapiens (Human) protein is Transmembrane protein 42 (TMEM42).